The chain runs to 98 residues: NADH-ubiquinone oxidoreductase chain 4L (98 aa).

Helical transmembrane passes span 1 to 21 (MPLIHINIMMAFIMSLVGLLM), 29 to 49 (ALLCLEGMMLSLFILTALLAL), and 61 to 81 (IILLVFAACEAAIGLALLVMI).

It belongs to the complex I subunit 4L family. As to quaternary structure, core subunit of respiratory chain NADH dehydrogenase (Complex I) which is composed of 45 different subunits.

Its subcellular location is the mitochondrion inner membrane. It catalyses the reaction a ubiquinone + NADH + 5 H(+)(in) = a ubiquinol + NAD(+) + 4 H(+)(out). Its function is as follows. Core subunit of the mitochondrial membrane respiratory chain NADH dehydrogenase (Complex I) which catalyzes electron transfer from NADH through the respiratory chain, using ubiquinone as an electron acceptor. Part of the enzyme membrane arm which is embedded in the lipid bilayer and involved in proton translocation. This is NADH-ubiquinone oxidoreductase chain 4L (MT-ND4L) from Kogia breviceps (Pygmy sperm whale).